Consider the following 137-residue polypeptide: Golgin subfamily A member 7 (137 aa).

Residues C69 and C72 are each lipidated (S-palmitoyl cysteine).

The protein belongs to the ERF4 family. In terms of assembly, interacts with GOLGA3. Interacts with ZDHHC9. Palmitoylated on Cys-69 and Cys-72; which is required for Golgi localization and interaction with GOLGA3.

Its subcellular location is the golgi apparatus membrane. May be involved in protein transport from Golgi to cell surface. The ZDHHC9-GOLGA7 complex is a palmitoyltransferase specific for HRAS and NRAS. The chain is Golgin subfamily A member 7 (Golga7) from Rattus norvegicus (Rat).